A 1732-amino-acid chain; its full sequence is Transient receptor potential cation channel subfamily M member 3 (1732 aa).

Residues 1–894 (MPGPWGTVYF…RKIYEFYNAP (894 aa)) are Cytoplasmic-facing. Calmodulin-binding stretches follow at residues 41 to 64 (WTIRKLCHAAFLPSVRLLKAQKSW), 192 to 215 (NFELQPKLKQVFGKGLIKAAMTTG), 300 to 323 (TGKYGAEVKLRRQLEKHISLQKIN), 601 to 624 (RKRFRTLYHNLFGPKRPKALKLLG), and 793 to 816 (RKNSGLKVILGILLPPSILSLEFK). The tract at residues 617–625 (PKALKLLGM) is required for the inhibitory action of G-beta/gamma-subunits of heterotrimeric G-proteins. Serine 796 is a binding site for 1,2-dioctanoyl-sn-glycero-3-phospho-(1D-myo-inositol-4,5-bisphosphate). The interval 829-851 (EIHLQEKEPEEPEKPTKEKDEED) is disordered. Over residues 831–847 (HLQEKEPEEPEKPTKEK) the composition is skewed to basic and acidic residues. A helical transmembrane segment spans residues 895 to 918 (IVKFWFYTLAYIGYLMLFNYIVLV). At 919-925 (KMERWPS) the chain is on the extracellular side. The chain crosses the membrane as a helical span at residues 926–948 (TQEWIVISYIFTLGIEKMREILM). The Cytoplasmic segment spans residues 949–964 (SEPGKLLQKVKVWLQE). The chain crosses the membrane as a helical span at residues 965–985 (YWNVTDLIAILLFSVGMILRL). Topologically, residues 986 to 989 (QDQP) are extracellular. The chain crosses the membrane as a helical span at residues 990 to 1013 (FRSDGRVIYCVNIIYWYIRLLDIF). At 1014–1028 (GVNKYLGPYVMMIGK) the chain is on the cytoplasmic side. Positions 1017 and 1018 each coordinate 1,2-dioctanoyl-sn-glycero-3-phospho-(1D-myo-inositol-4,5-bisphosphate). Residues 1029-1056 (MMIDMMYFVIIMLVVLMSFGVARQAILF) form a helical membrane-spanning segment. Topologically, residues 1057-1073 (PNEEPSWKLAKNIFYMP) are extracellular. An intramembrane region (pore-forming) is located at residues 1074-1101 (YWMIYGEVFADQIDPPCGQNETREDGKT). The Extracellular portion of the chain corresponds to 1102–1111 (IQLPPCKTGA). A helical membrane pass occupies residues 1112–1137 (WIVPAIMACYLLVANILLVNLLIAVF). Over 1138–1732 (NNTFFEVKSI…AFHSFESKHN (595 aa)) the chain is Cytoplasmic. The tract at residues 1610–1732 (EREAELSHPS…AFHSFESKHN (123 aa)) is disordered. Composition is skewed to polar residues over residues 1635–1653 (PISSQEAENADRTLSNNIT) and 1690–1701 (NTASLRNPFQRS).

This sequence belongs to the transient receptor (TC 1.A.4) family. LTrpC subfamily. TRPM3 sub-subfamily. Homotetramer. Interacts with TRPM1; the interaction results in the formation of a heteromultimeric cation channel complex that are functionally different from the homomeric channels.

Its subcellular location is the cell membrane. It catalyses the reaction Ca(2+)(in) = Ca(2+)(out). It carries out the reaction Mn(2+)(in) = Mn(2+)(out). The enzyme catalyses Zn(2+)(in) = Zn(2+)(out). The catalysed reaction is Mg(2+)(in) = Mg(2+)(out). It catalyses the reaction Na(+)(in) = Na(+)(out). Its activity is regulated as follows. Activated by the neurosteroid pregnelonone sulfate (PregS). PregS activates the channel by shifting its current-voltage activation curve toward more negative membrane potentials and also potentiates temperature-induced activation. Activated by heat. Intracellular Ca(2+) inhibits TRPM3 probably via interaction with Ca(2+)/calmodulin. Intracellular Mg(2+) inhibits TRPM3 activity. Both intracellular and extracellular protons block TRPM3 through propable binding sites in the pore region. Positively regulated by phosphoinositide phosphoinositol 4,5-biphosphate (PI(4,5)P2). Strongly inhibited by activation of G(i)-coupled receptors via direct binding with G-beta/gamma-subunits of heterotrimeric G-proteins. With respect to regulation, insensitive to pregnenolone sulfate (PregS) or heat. Not inhibited by G-beta/gamma-subunits of heterotrimeric G-proteins. Functionally, constitutively active, non-selective divalent cation-conducting channel that is permeable to Ca(2+), Mn(2+), and Mg(2+), with a high permeability for Ca(2+). However, can be enhanced by increasing temperature and by ligands, including the endogenous neurosteroid pregnenolone sulfate and sphingosine-1 and suppressed by intracellular Mg(2+). Implicated in a variety of cellular processes, including insulin/peptide secretion, vascular constriction and dilation, noxious heat sensing, inflammatory and spontaneous pain sensitivity. In neurons of the dorsal root ganglia, functions as thermosensitive channel for the detection of noxious heat and spontaneous pain. Suggested to function as an ionotropic steroid receptor in beta-cell, indeed pregnenolone sulfate leads to Ca(2+) influx and enhanced insulin secretion. Mediates Zn(2+) uptake into the lumen of pancreatic beta cell secretory granules, thereby regulating insulin secretion. Forms heteromultimeric ion channels with TRPM1 which are permeable for Ca(2+) and Zn(2+) ions. Exists as multiple splice variants which differ significantly in their biophysical properties. In terms of biological role, displays strongly reduced permeability for divalent cations and high selectivity toward monovalent cations. Its function is as follows. No channel activity. The chain is Transient receptor potential cation channel subfamily M member 3 from Mus musculus (Mouse).